The following is a 360-amino-acid chain: Glutamate 5-kinase (360 aa).

Residue lysine 7 participates in ATP binding. Substrate is bound by residues serine 47, aspartate 134, and asparagine 146. ATP is bound by residues 166–167 (TD) and 210–216 (TGGISTK). The region spanning 275 to 356 (VGKITLDDGA…SSIIVVHRDV (82 aa)) is the PUA domain.

Belongs to the glutamate 5-kinase family.

The protein resides in the cytoplasm. The catalysed reaction is L-glutamate + ATP = L-glutamyl 5-phosphate + ADP. Its pathway is amino-acid biosynthesis; L-proline biosynthesis; L-glutamate 5-semialdehyde from L-glutamate: step 1/2. Its function is as follows. Catalyzes the transfer of a phosphate group to glutamate to form L-glutamate 5-phosphate. The chain is Glutamate 5-kinase from Prochlorococcus marinus (strain AS9601).